The sequence spans 517 residues: 2,3-bisphosphoglycerate-independent phosphoglycerate mutase (517 aa).

Residues D14 and S64 each contribute to the Mn(2+) site. The active-site Phosphoserine intermediate is S64. Residues H125, 155-156 (RD), R187, R193, 259-262 (RPDR), and K334 contribute to the substrate site. Residues D401, H405, D442, H443, and H461 each coordinate Mn(2+).

Belongs to the BPG-independent phosphoglycerate mutase family. Monomer. Requires Mn(2+) as cofactor.

It carries out the reaction (2R)-2-phosphoglycerate = (2R)-3-phosphoglycerate. It functions in the pathway carbohydrate degradation; glycolysis; pyruvate from D-glyceraldehyde 3-phosphate: step 3/5. Its function is as follows. Catalyzes the interconversion of 2-phosphoglycerate and 3-phosphoglycerate. The protein is 2,3-bisphosphoglycerate-independent phosphoglycerate mutase of Symbiobacterium thermophilum (strain DSM 24528 / JCM 14929 / IAM 14863 / T).